Here is a 746-residue protein sequence, read N- to C-terminus: GTPase-activating protein GYP7 (746 aa).

2 positions are modified to phosphoserine: Ser265 and Ser339. The 249-residue stretch at 385 to 633 (LENDSLRGKV…HIWENFWTFY (249 aa)) folds into the Rab-GAP TBC domain. The interval 470–505 (TIDGLPPPPQQLPANENNSTSPESANDESDDADDGV) is disordered. Residues 481–491 (LPANENNSTSP) show a composition bias toward polar residues.

The protein resides in the cytoplasm. Functionally, GTPase-activating protein (GAP) that most effectively accelerates the intrinsic GTPase activity of Ypt/Rab-type GTPase YPT7 involved in vacuole docking and fusion. It is also active, but to a lesser extent, on YPT31, YPT32, YPT1, YPT6 and SEC4. Provides a catalytic arginine (arginine finger) in trans to accelerate the GTP hydrolysis rate of the substrate GTPase. The protein is GTPase-activating protein GYP7 (GYP7) of Saccharomyces cerevisiae (strain ATCC 204508 / S288c) (Baker's yeast).